We begin with the raw amino-acid sequence, 184 residues long: Thymidine kinase (184 aa).

ATP is bound by residues 15-22 (GPMFSGKS) and 89-92 (DEIQ). The active-site Proton acceptor is the Glu90. The Zn(2+) site is built by Cys146, Cys149, Cys178, and Cys181.

Belongs to the thymidine kinase family. In terms of assembly, homotetramer.

It localises to the cytoplasm. It carries out the reaction thymidine + ATP = dTMP + ADP + H(+). This is Thymidine kinase from Mesomycoplasma hyopneumoniae (strain 232) (Mycoplasma hyopneumoniae).